The chain runs to 80 residues: MKRILIAPVRFYQRFISPVFPPSCRFELTCSNYMIQAIEKHGFKGVLMGLARILRCHPWSKTGKDPVPDHFSLKRNQEGE.

The disordered stretch occupies residues 61–80; sequence KTGKDPVPDHFSLKRNQEGE. Residues 62–80 are compositionally biased toward basic and acidic residues; it reads TGKDPVPDHFSLKRNQEGE.

This sequence belongs to the UPF0161 family.

The protein resides in the cell membrane. Its function is as follows. Could be involved in insertion of integral membrane proteins into the membrane. The chain is Putative membrane protein insertion efficiency factor from Streptococcus pneumoniae serotype 19F (strain G54).